We begin with the raw amino-acid sequence, 531 residues long: O-phosphoserine--tRNA(Cys) ligase (531 aa).

Substrate-binding positions include 189–191 (HMT), 234–236 (SAS), 276–277 (YY), and Asn-319.

The protein belongs to the class-II aminoacyl-tRNA synthetase family. O-phosphoseryl-tRNA(Cys) synthetase subfamily. In terms of assembly, homotetramer. Interacts with SepCysS.

It catalyses the reaction tRNA(Cys) + O-phospho-L-serine + ATP = O-phospho-L-seryl-tRNA(Cys) + AMP + diphosphate. In terms of biological role, catalyzes the attachment of O-phosphoserine (Sep) to tRNA(Cys). The protein is O-phosphoserine--tRNA(Cys) ligase of Methanoculleus marisnigri (strain ATCC 35101 / DSM 1498 / JR1).